A 473-amino-acid chain; its full sequence is H(+)/Cl(-) exchange transporter ClcA (473 aa).

Over 1-32 the chain is Cytoplasmic; it reads MKTDTPSLEIPQAARLRRRQLIRQLLERDKTP. A helical membrane pass occupies residues 33–69; that stretch reads LAILFMAAVVGTLVGLAAVAFDKGVSWLQNQRMGALV. Residues 70 to 76 are Periplasmic-facing; the sequence is HTADNYP. The chain crosses the membrane as a helical span at residues 77-100; the sequence is LLLTVAFLCSAVLAMFGYFLVRKY. A Selectivity filter part_1 motif is present at residues 106-110; it reads GSGIP. S107 is a binding site for chloride. An intramembrane region (helical) is located at residues 109–116; the sequence is IPEIEGAL. Over 117-123 the chain is Cytoplasmic; that stretch reads EDQRPVR. Helical transmembrane passes span 124–141 and 148–166; these read WWRV…TLGG and EGPT…LDIF. Positions 146-150 match the Selectivity filter part_2 motif; sequence GREGP. The Cytoplasmic segment spans residues 167 to 176; sequence RLKGDEARHT. 2 consecutive intramembrane regions (helical) follow at residues 177–189 and 193–201; these read LLAT…LAAA and PLAGILFII. Over 202-214 the chain is Cytoplasmic; the sequence is EEMRPQFRYTLIS. A helical membrane pass occupies residues 215-232; the sequence is IKAVFIGVIMSTIMYRIF. Topologically, residues 233–252 are periplasmic; that stretch reads NHEVALIDVGKLSDAPLNTL. Residues 253 to 281 traverse the membrane as a helical segment; the sequence is WLYLILGIIFGIFGPIFNKWVLGMQDLLH. Residues 282-287 are Cytoplasmic-facing; the sequence is RVHGGN. A helical transmembrane segment spans residues 288 to 309; the sequence is ITKWVIMGGAIGGLCGLLGFVA. Residues 310–329 are Periplasmic-facing; it reads PATSGGGFNLIPIATAGNFS. A run of 2 helical transmembrane segments spans residues 330-349 and 355-376; these read MGML…LCFS and GIFA…MVAV. The short motif at 355–359 is the Selectivity filter part_3 element; the sequence is GIFAP. Chloride is bound by residues I356 and F357. The Periplasmic segment spans residues 377-386; that stretch reads ELFPQYHLEA. The segment at residues 387-401 is an intramembrane region (helical); sequence GTFAIAGMGALLAAS. An intramembrane region (note=Loop between two helices) is located at residues 402-404; that stretch reads IRA. The segment at residues 405–416 is an intramembrane region (helical); it reads PLTGIILVLEMT. The note=Loop between two helices intramembrane region spans 417–421; the sequence is DNYQL. Residues 422–438 form a helical membrane-spanning segment; sequence ILPMIITGLGATLLAQF. Over 439–473 the chain is Cytoplasmic; the sequence is TGGKPLYSAILARTLAKQEAEQLARSKAASASENT. Y445 is a binding site for chloride.

This sequence belongs to the chloride channel (TC 2.A.49) family. ClcA subfamily. Homodimer.

It localises to the cell inner membrane. It carries out the reaction 2 chloride(in) + H(+)(out) = 2 chloride(out) + H(+)(in). Its function is as follows. Proton-coupled chloride transporter. Functions as antiport system and exchanges two chloride ions for 1 proton. Probably acts as an electrical shunt for an outwardly-directed proton pump that is linked to amino acid decarboxylation, as part of the extreme acid resistance (XAR) response. The polypeptide is H(+)/Cl(-) exchange transporter ClcA (Escherichia fergusonii (strain ATCC 35469 / DSM 13698 / CCUG 18766 / IAM 14443 / JCM 21226 / LMG 7866 / NBRC 102419 / NCTC 12128 / CDC 0568-73)).